We begin with the raw amino-acid sequence, 106 residues long: Small ribosomal subunit protein uS10 (106 aa).

It belongs to the universal ribosomal protein uS10 family. As to quaternary structure, part of the 30S ribosomal subunit.

Its function is as follows. Involved in the binding of tRNA to the ribosomes. In Archaeoglobus fulgidus (strain ATCC 49558 / DSM 4304 / JCM 9628 / NBRC 100126 / VC-16), this protein is Small ribosomal subunit protein uS10.